A 793-amino-acid chain; its full sequence is Protein smoothened (793 aa).

Residues 1-30 (MAAGRPVRGPELAPRRLLQLLLLVLLGGRG) form the signal peptide. The Extracellular segment spans residues 31–237 (RGAALSGNVT…EAEHQDMHSY (207 aa)). The segment at 35-61 (LSGNVTGPGPRSAGGSARRNAPVTSPP) is disordered. Asn38 is a glycosylation site (N-linked (GlcNAc...) asparagine). Disulfide bonds link Cys68–Cys182, Cys74–Cys138, Cys82–Cys131, Cys122–Cys158, and Cys151–Cys173. One can recognise an FZ domain in the interval 69 to 185 (GRAAHCEPLR…DHFPEGCPNE (117 aa)). Cholesterol is bound at residue Asp99. Asn192 is a glycosylation site (N-linked (GlcNAc...) asparagine). 3 disulfides stabilise this stretch: Cys197/Cys217, Cys221/Cys299, and Cys318/Cys394. The helical transmembrane segment at 238-258 (IAAFGAVTGLCTLFTLATFVA) threads the bilayer. Topologically, residues 259 to 266 (DWRNSNRY) are cytoplasmic. A helical transmembrane segment spans residues 267-287 (PAVILFYVNACFFVGSIGWLA). Residues 288-318 (QFMDGARREIVCRADGTMRFGEPTSSETLSC) lie on the Extracellular side of the membrane. A helical membrane pass occupies residues 319 to 339 (VIIFVIVYYALMAGVVWFVVL). Over 340 to 362 (TYAWHTSFKALGTTYQPLSGKTS) the chain is Cytoplasmic. A helical membrane pass occupies residues 363-383 (YFHLLTWSLPFVLTVAILAVA). The Extracellular portion of the chain corresponds to 384-406 (QVDGDSVSGICFVGYKNYRYRAG). Residue Tyr398 coordinates cholesterol. The chain crosses the membrane as a helical span at residues 407–427 (FVLAPIGLVLIVGGYFLIRGV). The Cytoplasmic segment spans residues 428–455 (MTLFSIKSNHPGLLSEKAASKINETMLR). Residues 456-476 (LGIFGFLAFGFVLITFSCHFY) traverse the membrane as a helical segment. The Extracellular segment spans residues 477–528 (DFFNQAEWERSFRDYVLCQANVTIGLPTKKPIPDCEIKNRPSLLVEKINLFA). Cys494 and Cys511 are disulfide-bonded. A glycan (N-linked (GlcNAc...) asparagine) is linked at Asn497. Residues 529–549 (MFGTGIAMSTWVWTKATLLIW) form a helical membrane-spanning segment. The tract at residues 542 to 573 (TKATLLIWRRTWCRLTGHSDDEPKRIKKSKMI) is interaction with BBS5 and BBS7. The Cytoplasmic segment spans residues 550–793 (RRTWCRLTGH…AELLDADSDF (244 aa)). Ser560, Ser578, and Ser594 each carry phosphoserine. The segment at 574-657 (AKAFSKRREL…TPVPPEEQAN (84 aa)) is required for interaction with PRKACA. Residues 585-597 (QNPGQELSFSMHT) form an interaction with DLG5 region. A Phosphothreonine modification is found at Thr597. Residues Ser599 and Ser642 each carry the phosphoserine modification. Thr644 and Thr648 each carry phosphothreonine. Ser666 is subject to Phosphoserine. A compositionally biased stretch (basic residues) spans 674-684 (GRKKKRRKRKK). The interval 674–702 (GRKKKRRKRKKEVCPLGPAPELHHSAPVP) is disordered.

The protein belongs to the G-protein coupled receptor Fz/Smo family. Homodimer. Interacts (via C-terminus) with protein kinase A catalytic subunit PRKACA; interacts with free PRKACA subunits and the interaction leads to sequestration of PRKACA at the membrane, preventing PRKACA-mediated phosphorylation of GLI transcription factors. Interacts with ARRB2. Interacts with KIF7. Interacts with BBS5 and BBS7; the interactions are indicative for the association of SMO with the BBsome complex to facilitate ciliary localization of SMO. Interacts with DLG5 and SDCBP. Interacts with GAS8/DRC4. Phosphorylation by GRK kinases is required for interaction with protein kinase A catalytic subunit PRKACA. In embryo, found in the early neural folds and neural tube, pre-somitic mesoderm and somites, developing limb bud, gut, eye, testes, cartilage, muscle, lung, epiglottis, thymus, tongue, jaw, taste buds, teeth, and skin. In adult, found in multiple tissues including heart, brain, liver, lung, skeletal muscle, kidney and testis.

The protein localises to the cell membrane. It localises to the cell projection. Its subcellular location is the cilium. Its function is as follows. G protein-coupled receptor which associates with the patched protein (PTCH) to transduce hedgehog protein signaling. Binding of sonic hedgehog (SHH) to its receptor patched prevents inhibition of smoothened (SMO) by patched. When active, SMO binds to and sequesters protein kinase A catalytic subunit PRKACA at the cell membrane, preventing PRKACA-mediated phosphorylation of GLI transcription factors which releases the GLI proteins from PRKACA-mediated inhibition and allows for transcriptional activation of hedgehog pathway target genes. Required for the accumulation of KIF7, GLI2 and GLI3 in the cilia. Interacts with DLG5 at the ciliary base to induce the accumulation of KIF7 and GLI2 at the ciliary tip for GLI2 activation. This is Protein smoothened (Smo) from Rattus norvegicus (Rat).